The chain runs to 367 residues: Uroporphyrinogen decarboxylase (367 aa).

Substrate contacts are provided by residues 28-32, D78, Y158, T213, and H334; that span reads RQAGR.

This sequence belongs to the uroporphyrinogen decarboxylase family. In terms of assembly, homodimer.

It localises to the cytoplasm. The catalysed reaction is uroporphyrinogen III + 4 H(+) = coproporphyrinogen III + 4 CO2. It functions in the pathway porphyrin-containing compound metabolism; protoporphyrin-IX biosynthesis; coproporphyrinogen-III from 5-aminolevulinate: step 4/4. Its function is as follows. Catalyzes the decarboxylation of four acetate groups of uroporphyrinogen-III to yield coproporphyrinogen-III. The sequence is that of Uroporphyrinogen decarboxylase from Ralstonia pickettii (strain 12J).